The sequence spans 332 residues: Oxygen-dependent coproporphyrinogen-III oxidase (332 aa).

Ser-119 is a binding site for coproporphyrinogen III. Residue His-133 is the Proton donor of the active site. Coproporphyrinogen III contacts are provided by residues 135 to 137 (NVR) and 284 to 285 (GR).

This sequence belongs to the aerobic coproporphyrinogen-III oxidase family. Homodimer.

The enzyme catalyses coproporphyrinogen III + O2 + 2 H(+) = protoporphyrinogen IX + 2 CO2 + 2 H2O. The protein operates within porphyrin-containing compound metabolism; protoporphyrin-IX biosynthesis; protoporphyrinogen-IX from coproporphyrinogen-III (O2 route): step 1/1. In terms of biological role, involved in the heme biosynthesis. Catalyzes the aerobic oxidative decarboxylation of propionate groups of rings A and B of coproporphyrinogen-III to yield the vinyl groups in protoporphyrinogen-IX. The sequence is that of Oxygen-dependent coproporphyrinogen-III oxidase (cpox) from Dictyostelium discoideum (Social amoeba).